Here is a 110-residue protein sequence, read N- to C-terminus: uncharacterized protein (110 aa).

This is an uncharacterized protein from Human cytomegalovirus (strain AD169) (HHV-5).